A 321-amino-acid chain; its full sequence is Solute carrier family 25 member 33 (321 aa).

3 Solcar repeats span residues 9 to 118 (ENTL…AKEQ), 126 to 213 (NSNI…LKKY), and 231 to 315 (TNFF…IVYL). 6 consecutive transmembrane segments (helical) span residues 12-32 (LLHL…TCPL), 49-65 (VYYP…AGVV), 121-141 (GVFV…AAFV), 190-210 (LTAS…YESL), 233-253 (FFGL…VAYP), and 298-318 (QIPN…LLED).

It belongs to the mitochondrial carrier (TC 2.A.29) family.

It is found in the mitochondrion inner membrane. It catalyses the reaction UTP(in) + UDP(out) = UTP(out) + UDP(in). It carries out the reaction dUTP(out) + UTP(in) = dUTP(in) + UTP(out). The enzyme catalyses 5-methyl-UTP(out) + UTP(in) = 5-methyl-UTP(in) + UTP(out). The catalysed reaction is 5-methyl-UDP(out) + UTP(in) = 5-methyl-UDP(in) + UTP(out). It catalyses the reaction UTP(in) + CTP(out) = UTP(out) + CTP(in). It carries out the reaction CDP(out) + UTP(in) = CDP(in) + UTP(out). The enzyme catalyses dCTP(out) + UTP(in) = dCTP(in) + UTP(out). The catalysed reaction is dCDP(out) + UTP(in) = dCDP(in) + UTP(out). It catalyses the reaction UTP(in) + GTP(out) = UTP(out) + GTP(in). It carries out the reaction UTP(in) + GDP(out) = UTP(out) + GDP(in). The enzyme catalyses dGTP(out) + UTP(in) = dGTP(in) + UTP(out). The catalysed reaction is dGDP(out) + UTP(in) = dGDP(in) + UTP(out). It catalyses the reaction ITP(out) + UTP(in) = ITP(in) + UTP(out). In terms of biological role, mitochondrial transporter that imports/exports pyrimidine nucleotides into and from mitochondria. Selectively transports uridine, thymidine, guanosine, cytosine and inosine (deoxy)nucleoside di- and triphosphates by an antiport mechanism. May import (deoxy)nucleoside triphosphates in exchange for intramitochondrial (deoxy)nucleoside diphosphates, thus providing precursors necessary for de novo synthesis of mitochondrial DNA and RNA while exporting products of their catabolism. Participates in mitochondrial genome maintenance, regulation of mitochondrial membrane potential and mitochondrial respiration. Upon INS or IGF1 stimulation regulates cell growth and proliferation by controlling mitochondrial DNA replication and transcription, the ratio of mitochondria-to nuclear-encoded components of the electron transport chain resulting in control of mitochondrial ROS production. Participates in dendritic cell endocytosis and may associate with mitochondrial oxidative phosphorylation. This chain is Solute carrier family 25 member 33 (SLC25A33), found in Bos taurus (Bovine).